We begin with the raw amino-acid sequence, 316 residues long: Porphobilinogen deaminase (316 aa).

C242 is subject to S-(dipyrrolylmethanemethyl)cysteine.

The protein belongs to the HMBS family. Monomer. Requires dipyrromethane as cofactor.

The catalysed reaction is 4 porphobilinogen + H2O = hydroxymethylbilane + 4 NH4(+). It participates in porphyrin-containing compound metabolism; protoporphyrin-IX biosynthesis; coproporphyrinogen-III from 5-aminolevulinate: step 2/4. In terms of biological role, tetrapolymerization of the monopyrrole PBG into the hydroxymethylbilane pre-uroporphyrinogen in several discrete steps. The polypeptide is Porphobilinogen deaminase (Thioalkalivibrio sulfidiphilus (strain HL-EbGR7)).